The chain runs to 702 residues: Rho GTPase-activating protein 22 (702 aa).

In terms of domain architecture, PH spans Pro-43–Trp-151. The Rho-GAP domain occupies Gln-161 to Phe-355. Disordered regions lie at residues Leu-360–Pro-433, Ser-438–Glu-457, Arg-480–Thr-511, and Pro-555–His-596. A phosphoserine mark is found at Ser-365 and Ser-397. Polar residues-rich tracts occupy residues Ser-407–Ala-421, Ser-438–Leu-456, Gly-491–Pro-504, and Ser-581–Gln-594. Residues Gln-594 to Leu-691 are a coiled coil.

As to quaternary structure, interacts with VEZF1. As to expression, predominantly present in endothelial cells (at protein level).

The protein localises to the cytoplasm. Its subcellular location is the nucleus. Its function is as follows. Rho GTPase-activating protein involved in the signal transduction pathway that regulates endothelial cell capillary tube formation during angiogenesis. Acts as a GTPase activator for the RAC1 by converting it to an inactive GDP-bound state. Inhibits RAC1-dependent lamellipodia formation. May also play a role in transcription regulation via its interaction with VEZF1, by regulating activity of the endothelin-1 (EDN1) promoter. This Mus musculus (Mouse) protein is Rho GTPase-activating protein 22 (Arhgap22).